The primary structure comprises 472 residues: Uronate isomerase (472 aa).

It belongs to the metallo-dependent hydrolases superfamily. Uronate isomerase family.

It carries out the reaction D-glucuronate = D-fructuronate. The catalysed reaction is aldehydo-D-galacturonate = keto-D-tagaturonate. It participates in carbohydrate metabolism; pentose and glucuronate interconversion. This is Uronate isomerase from Opitutus terrae (strain DSM 11246 / JCM 15787 / PB90-1).